A 133-amino-acid polypeptide reads, in one-letter code: Snaclec echicetin subunit alpha (133 aa).

Intrachain disulfides connect cysteine 4–cysteine 15, cysteine 31–cysteine 127, and cysteine 102–cysteine 119. The C-type lectin domain occupies 11-128 (YEGHCYQLFR…CEFKFPFVCK (118 aa)).

It belongs to the snaclec family. In terms of assembly, heterodimer of subunits alpha and beta; disulfide-linked. Forms an active complex with the pentameric immunoglobuline Mkappa (IgMkappa). As to expression, expressed by the venom gland.

Its subcellular location is the secreted. In terms of biological role, echicetin itself inhibits aggregation of washed platelets induced by vWF, thrombin or alboaggregin-A. However, when complexed with the pentameric plasma immunoglobulin Mkappa (IgMkappa), echicetin binds specifically to GPIb and activates platelets. This is caused by P-selectin expression and activation of alpha-IIb/beta-3 as well as tyrosine phosphorylation of several signal transduction molecules, including p53/56(LYN), p64, p72(SYK), p70 to p90, and p120. In vivo, it induces thrombocytopenia when injected into mice, probably accounting of activation of platelets rather than inhibition. This is Snaclec echicetin subunit alpha from Echis carinatus sochureki (Saw-scaled viper).